A 215-amino-acid polypeptide reads, in one-letter code: MCSSRCLLFLATLAFLIHLSLARATPVSTPAQCLAHSQNLLRTTNHMLEKAIQTLKHYPCTAEDIDHEDITEDKTSTLNACLPPELAKNESCWASGKTSSVTRGSCLPPQKTSSMMTLCLSSIYEDLKMYQTEFKAINAELLDHNRKQIILDENMLTAIDELMQALNLNGETRPQKPSLEEADPYKVKIKLCILLHAFSIRAITINRVMSYLNSA.

The first 22 residues, 1-22 (MCSSRCLLFLATLAFLIHLSLA), serve as a signal peptide directing secretion. 3 disulfides stabilise this stretch: C33–C106, C60–C192, and C81–C119. A glycan (N-linked (GlcNAc...) asparagine) is linked at N89.

It belongs to the IL-6 superfamily. Heterodimer with IL12B; disulfide-linked. This heterodimer is known as interleukin IL-12. Heterodimer with EBI3/IL27B; not disulfide-linked. This heterodimer is known as interleukin IL-35. Interacts with NBR1; this interaction promotes IL-12 secretion.

It is found in the secreted. In terms of biological role, heterodimerizes with IL12B to form the IL-12 cytokine or with EBI3/IL27B to form the IL-35 cytokine. IL-12 is primarily produced by professional antigen-presenting cells (APCs) such as B-cells and dendritic cells (DCs) as well as macrophages and granulocytes and regulates T-cell and natural killer-cell responses, induces the production of interferon-gamma (IFN-gamma), favors the differentiation of T-helper 1 (Th1) cells and is an important link between innate resistance and adaptive immunity. Mechanistically, exerts its biological effects through a receptor composed of IL12R1 and IL12R2 subunits. Binding to the receptor results in the rapid tyrosine phosphorylation of a number of cellular substrates including the JAK family kinases TYK2 and JAK2. In turn, recruited STAT4 gets phosphorylated and translocates to the nucleus where it regulates cytokine/growth factor responsive genes. As part of IL-35, plays essential roles in maintaining the immune homeostasis of the liver microenvironment and also functions as an immune-suppressive cytokine. Mediates biological events through unconventional receptors composed of IL12RB2 and gp130/IL6ST heterodimers or homodimers. Signaling requires the transcription factors STAT1 and STAT4, which form a unique heterodimer that binds to distinct DNA sites. The polypeptide is Interleukin-12 subunit alpha (IL12A) (Sigmodon hispidus (Hispid cotton rat)).